The chain runs to 342 residues: Ferrochelatase (342 aa).

The Fe cation site is built by His-188 and Glu-268.

Belongs to the ferrochelatase family.

The protein resides in the cytoplasm. The enzyme catalyses heme b + 2 H(+) = protoporphyrin IX + Fe(2+). It participates in porphyrin-containing compound metabolism; protoheme biosynthesis; protoheme from protoporphyrin-IX: step 1/1. Catalyzes the ferrous insertion into protoporphyrin IX. The sequence is that of Ferrochelatase from Rickettsia prowazekii (strain Madrid E).